The primary structure comprises 373 residues: 3 beta-hydroxysteroid dehydrogenase/Delta 5--&gt;4-isomerase type 4 (373 aa).

Residue Tyr-155 is the Proton acceptor of the active site. Lys-159 contributes to the NAD(+) binding site. Residues 288–308 traverse the membrane as a helical segment; sequence LPLLYWLAFLLEIVSFFLHPV. Residue Lys-350 is modified to N6-acetyllysine.

The protein belongs to the 3-beta-HSD family. Skin, placenta, also detectable in ovary and adrenal gland.

It localises to the endoplasmic reticulum membrane. The protein resides in the mitochondrion membrane. The enzyme catalyses a 3beta-hydroxy-Delta(5)-steroid + NAD(+) = a 3-oxo-Delta(5)-steroid + NADH + H(+). It carries out the reaction a 3-oxo-Delta(5)-steroid = a 3-oxo-Delta(4)-steroid. Its pathway is lipid metabolism; steroid biosynthesis. Its function is as follows. 3-beta-HSD is a bifunctional enzyme, that catalyzes the oxidative conversion of Delta(5)-ene-3-beta-hydroxy steroid, and the oxidative conversion of ketosteroids. The 3-beta-HSD enzymatic system plays a crucial role in the biosynthesis of all classes of hormonal steroids. This is 3 beta-hydroxysteroid dehydrogenase/Delta 5--&gt;4-isomerase type 4 (Hsd3b6) from Rattus norvegicus (Rat).